The sequence spans 643 residues: 1-deoxy-D-xylulose-5-phosphate synthase (643 aa).

Residues histidine 78 and 119 to 121 contribute to the thiamine diphosphate site; that span reads AHS. Residue aspartate 150 participates in Mg(2+) binding. Residues 151 to 152, asparagine 179, tyrosine 288, and glutamate 370 each bind thiamine diphosphate; that span reads GS. Asparagine 179 serves as a coordination point for Mg(2+).

This sequence belongs to the transketolase family. DXPS subfamily. As to quaternary structure, homodimer. Requires Mg(2+) as cofactor. Thiamine diphosphate is required as a cofactor.

The catalysed reaction is D-glyceraldehyde 3-phosphate + pyruvate + H(+) = 1-deoxy-D-xylulose 5-phosphate + CO2. Its pathway is metabolic intermediate biosynthesis; 1-deoxy-D-xylulose 5-phosphate biosynthesis; 1-deoxy-D-xylulose 5-phosphate from D-glyceraldehyde 3-phosphate and pyruvate: step 1/1. Catalyzes the acyloin condensation reaction between C atoms 2 and 3 of pyruvate and glyceraldehyde 3-phosphate to yield 1-deoxy-D-xylulose-5-phosphate (DXP). The protein is 1-deoxy-D-xylulose-5-phosphate synthase of Brucella abortus (strain S19).